A 1614-amino-acid polypeptide reads, in one-letter code: Adenylate cyclase type 10 (1614 aa).

Guanylate cyclase domains follow at residues 42-179 and 293-418; these read VLMF…RLAQ and TIVF…ARMM. Mg(2+)-binding residues include aspartate 47 and isoleucine 48. 47–52 contributes to the ATP binding site; sequence DISGFT. Lysine 95 serves as a coordination point for hydrogencarbonate. Mg(2+) is bound at residue aspartate 99. The ATP site is built by aspartate 99 and lysine 144. Residues valine 167, arginine 176, and methionine 337 each coordinate hydrogencarbonate. ATP is bound by residues valine 406 and 412–416; that span reads NIAAR.

It belongs to the adenylyl cyclase class-4/guanylyl cyclase family. It depends on Mg(2+) as a cofactor. Mn(2+) is required as a cofactor. In terms of tissue distribution, expressed in testis.

The protein resides in the cell membrane. It is found in the cytoplasm. The protein localises to the cytoskeleton. Its subcellular location is the perinuclear region. It localises to the nucleus. The protein resides in the cell projection. It is found in the cilium. The protein localises to the mitochondrion. It carries out the reaction ATP = 3',5'-cyclic AMP + diphosphate. Activated by manganese or magnesium ions. In the presence of magnesium ions, the enzyme is activated by bicarbonate. Calcium mildly increases the enzyme activity, also in the presence of magnesium ions. Its function is as follows. Catalyzes the formation of the signaling molecule cAMP. May function as sensor that mediates responses to changes in cellular bicarbonate and CO(2) levels. Has a critical role in mammalian spermatogenesis by producing the cAMP which regulates cAMP-responsive nuclear factors indispensable for sperm maturation in the epididymis. Induces capacitation, the maturational process that sperm undergo prior to fertilization. Involved in ciliary beat regulation. In Mus musculus (Mouse), this protein is Adenylate cyclase type 10 (Adcy10).